A 95-amino-acid chain; its full sequence is Costars family protein At4g33640 (95 aa).

M1 carries the N-acetylmethionine modification.

This sequence belongs to the costars family.

The protein is Costars family protein At4g33640 of Arabidopsis thaliana (Mouse-ear cress).